Reading from the N-terminus, the 112-residue chain is Protein ORF1 (112 aa).

The segment covering methionine 1–glycine 10 has biased composition (low complexity). Positions methionine 1–glycine 20 are disordered. The chain crosses the membrane as a helical span at residues isoleucine 51 to cysteine 71.

It localises to the host membrane. This is Protein ORF1 from Snake adenovirus serotype 1 (SnAdV-1).